The sequence spans 453 residues: Tubulin beta-1 chain (453 aa).

8 residues coordinate GTP: Gln-12, Glu-71, Ser-140, Gly-144, Thr-145, Gly-146, Asn-206, and Asn-228. Glu-71 contributes to the Mg(2+) binding site. The segment at 431-453 (TADGVEGYEEEGYENDHPEDDEE) is disordered. Positions 436–453 (EGYEEEGYENDHPEDDEE) are enriched in acidic residues.

Belongs to the tubulin family. As to quaternary structure, dimer of alpha and beta chains. A typical microtubule is a hollow water-filled tube with an outer diameter of 25 nm and an inner diameter of 15 nM. Alpha-beta heterodimers associate head-to-tail to form protofilaments running lengthwise along the microtubule wall with the beta-tubulin subunit facing the microtubule plus end conferring a structural polarity. Microtubules usually have 13 protofilaments but different protofilament numbers can be found in some organisms and specialized cells. Requires Mg(2+) as cofactor.

It is found in the cytoplasm. The protein localises to the cytoskeleton. Functionally, tubulin is the major constituent of microtubules, a cylinder consisting of laterally associated linear protofilaments composed of alpha- and beta-tubulin heterodimers. Microtubules grow by the addition of GTP-tubulin dimers to the microtubule end, where a stabilizing cap forms. Below the cap, tubulin dimers are in GDP-bound state, owing to GTPase activity of alpha-tubulin. The chain is Tubulin beta-1 chain (TUBB) from Chondrus crispus (Carrageen Irish moss).